The sequence spans 251 residues: 3-deoxy-manno-octulosonate cytidylyltransferase (251 aa).

The protein belongs to the KdsB family.

The protein localises to the cytoplasm. It catalyses the reaction 3-deoxy-alpha-D-manno-oct-2-ulosonate + CTP = CMP-3-deoxy-beta-D-manno-octulosonate + diphosphate. The protein operates within nucleotide-sugar biosynthesis; CMP-3-deoxy-D-manno-octulosonate biosynthesis; CMP-3-deoxy-D-manno-octulosonate from 3-deoxy-D-manno-octulosonate and CTP: step 1/1. Its pathway is bacterial outer membrane biogenesis; lipopolysaccharide biosynthesis. In terms of biological role, activates KDO (a required 8-carbon sugar) for incorporation into bacterial lipopolysaccharide in Gram-negative bacteria. This chain is 3-deoxy-manno-octulosonate cytidylyltransferase, found in Rhizobium etli (strain CIAT 652).